The chain runs to 204 residues: Dual-action ribosomal maturation protein DarP (204 aa).

Disordered stretches follow at residues 1 to 31 and 182 to 204; these read MPPMTRKTRIQPIEPVAEEDDNGYDRPSKSQ and GGASDSDDEAADDAGDDHDDDEA. Positions 186-204 are enriched in acidic residues; it reads DSDDEAADDAGDDHDDDEA.

This sequence belongs to the DarP family.

The protein localises to the cytoplasm. Member of a network of 50S ribosomal subunit biogenesis factors which assembles along the 30S-50S interface, preventing incorrect 23S rRNA structures from forming. Promotes peptidyl transferase center (PTC) maturation. This Burkholderia orbicola (strain MC0-3) protein is Dual-action ribosomal maturation protein DarP.